The sequence spans 422 residues: S-adenosylmethionine synthase (422 aa).

H16 is an ATP binding site. D18 provides a ligand contact to Mg(2+). Position 44 (E44) interacts with K(+). 2 residues coordinate L-methionine: E57 and Q100. Positions 100–110 (QSPDISQGVSA) are flexible loop. ATP contacts are provided by residues 175 to 177 (DGK), 251 to 252 (KF), D260, 266 to 267 (RK), A283, and K287. D260 is a binding site for L-methionine. L-methionine is bound at residue K291.

The protein belongs to the AdoMet synthase family. Homotetramer; dimer of dimers. Requires Mg(2+) as cofactor. It depends on K(+) as a cofactor.

It localises to the cytoplasm. It catalyses the reaction L-methionine + ATP + H2O = S-adenosyl-L-methionine + phosphate + diphosphate. Its pathway is amino-acid biosynthesis; S-adenosyl-L-methionine biosynthesis; S-adenosyl-L-methionine from L-methionine: step 1/1. Its function is as follows. Catalyzes the formation of S-adenosylmethionine (AdoMet) from methionine and ATP. The overall synthetic reaction is composed of two sequential steps, AdoMet formation and the subsequent tripolyphosphate hydrolysis which occurs prior to release of AdoMet from the enzyme. The chain is S-adenosylmethionine synthase from Rippkaea orientalis (strain PCC 8801 / RF-1) (Cyanothece sp. (strain PCC 8801)).